The primary structure comprises 461 residues: Dihydrolipoyl dehydrogenase (461 aa).

Residues glutamate 34–cysteine 42, lysine 51, and glycine 114 each bind FAD. Cysteine 42 and cysteine 47 are disulfide-bonded. NAD(+) is bound by residues glycine 177–isoleucine 181, glutamate 200, and alanine 261–arginine 264. The FAD site is built by aspartate 304 and alanine 312. Histidine 436 acts as the Proton acceptor in catalysis.

This sequence belongs to the class-I pyridine nucleotide-disulfide oxidoreductase family. FAD is required as a cofactor.

It is found in the cytoplasm. The catalysed reaction is N(6)-[(R)-dihydrolipoyl]-L-lysyl-[protein] + NAD(+) = N(6)-[(R)-lipoyl]-L-lysyl-[protein] + NADH + H(+). The branched-chain alpha-keto dehydrogenase complex catalyzes the overall conversion of alpha-keto acids to acyl-CoA and CO(2). It contains multiple copies of 3 enzymatic components: branched-chain alpha-keto acid decarboxylase (E1), lipoamide acyltransferase (E2) and lipoamide dehydrogenase (E3). This Chlamydia pneumoniae (Chlamydophila pneumoniae) protein is Dihydrolipoyl dehydrogenase (lpdA).